Here is a 263-residue protein sequence, read N- to C-terminus: Purine nucleoside phosphorylase SAS1121 (263 aa).

Histidine 79, cysteine 124, and histidine 141 together coordinate Zn(2+).

Belongs to the purine nucleoside phosphorylase YfiH/LACC1 family. As to quaternary structure, homodimer. The cofactor is Cu(2+). It depends on Zn(2+) as a cofactor.

The enzyme catalyses adenosine + phosphate = alpha-D-ribose 1-phosphate + adenine. It catalyses the reaction S-methyl-5'-thioadenosine + phosphate = 5-(methylsulfanyl)-alpha-D-ribose 1-phosphate + adenine. The catalysed reaction is inosine + phosphate = alpha-D-ribose 1-phosphate + hypoxanthine. It carries out the reaction adenosine + H2O + H(+) = inosine + NH4(+). Its function is as follows. Purine nucleoside enzyme that catalyzes the phosphorolysis of adenosine and inosine nucleosides, yielding D-ribose 1-phosphate and the respective free bases, adenine and hypoxanthine. Also catalyzes the phosphorolysis of S-methyl-5'-thioadenosine into adenine and S-methyl-5-thio-alpha-D-ribose 1-phosphate. Also has adenosine deaminase activity. This Staphylococcus aureus (strain MSSA476) protein is Purine nucleoside phosphorylase SAS1121.